A 198-amino-acid chain; its full sequence is MPVGRKEQIVDCRAVMGLGEGGGLAQRGTFAEGLRNDVVVVAMSPGRRHITKPVCEITYGIREAGIQTSVLVLDAGGGIPSDAPQGSLGSTFGLKPDEARQVNRHKLCVIHFGNVKSHIIYKARLFLKYVTIPTIIVCQSPVDMEDFAKIGIKTLDVMPLEPKTEGTIVEIITGVVRGESSPQKKIDEIIESIKKHLG.

MCR is composed of three subunits: alpha, beta, and gamma. The function of proteins C and D is not known.

The polypeptide is Methyl-coenzyme M reductase operon protein C (mcrC) (Methanococcus vannielii).